Reading from the N-terminus, the 310-residue chain is MVGFRAGDVPPTATVKFIGAGTAACIADLFTFPLDTAKVRLQIQGENKASTNMGRGPVKYRGVFGTISTMVRVEGPRSLYSGLVAGLQRQMSFASVRIGLYDSVKQFYTKGSDHAGIGSRLMAGCTTGAMAVAVAQPTDVLKVRFQAQVSAGASKRYHSTMDAYRTIAKEEGFRGLWKGTGPNITRNAIVNCTELVTYDLIKDALLKSSLMTDDLPCHFTSAFGAGFCTTIIASPVDVVKTRYMNSAQGQYSSALNCAVAMLTKKGPKAFFKGFMPSFLRLGSWNVVMFVTYEQLKRAMMAARQNWHTPL.

Residues 1-10 lie on the Mitochondrial intermembrane side of the membrane; sequence MVGFRAGDVP. A helical transmembrane segment spans residues 11–32; it reads PTATVKFIGAGTAACIADLFTF. Solcar repeat units lie at residues 11-107, 115-204, and 213-298; these read PTAT…VKQF, AGIG…IKDA, and DDLP…LKRA. Residues 33–78 lie on the Mitochondrial matrix side of the membrane; the sequence is PLDTAKVRLQIQGENKASTNMGRGPVKYRGVFGTISTMVRVEGPRS. A helical transmembrane segment spans residues 79 to 101; sequence LYSGLVAGLQRQMSFASVRIGLY. Topologically, residues 102-120 are mitochondrial intermembrane; the sequence is DSVKQFYTKGSDHAGIGSR. Residues 121-137 traverse the membrane as a helical segment; it reads LMAGCTTGAMAVAVAQP. Residues 138–181 lie on the Mitochondrial matrix side of the membrane; that stretch reads TDVLKVRFQAQVSAGASKRYHSTMDAYRTIAKEEGFRGLWKGTG. Residues 182-198 traverse the membrane as a helical segment; the sequence is PNITRNAIVNCTELVTY. The Mitochondrial intermembrane segment spans residues 199-215; that stretch reads DLIKDALLKSSLMTDDL. Residues 216–235 form a helical membrane-spanning segment; sequence PCHFTSAFGAGFCTTIIASP. At 236–269 the chain is on the mitochondrial matrix side; that stretch reads VDVVKTRYMNSAQGQYSSALNCAVAMLTKKGPKA. Residues 270–292 form a helical membrane-spanning segment; it reads FFKGFMPSFLRLGSWNVVMFVTY. Residues 277-299 are purine nucleotide binding; sequence SFLRLGSWNVVMFVTYEQLKRAM. At 293–310 the chain is on the mitochondrial intermembrane side; the sequence is EQLKRAMMAARQNWHTPL.

Belongs to the mitochondrial carrier (TC 2.A.29) family. In terms of assembly, homotetramer. Adopts an asymmetrical dimer of dimers functional form.

The protein resides in the mitochondrion inner membrane. The enzyme catalyses L-aspartate(out) + phosphate(in) + H(+)(in) = L-aspartate(in) + phosphate(out) + H(+)(out). It carries out the reaction oxaloacetate(out) + phosphate(in) + H(+)(in) = oxaloacetate(in) + phosphate(out) + H(+)(out). It catalyses the reaction (S)-malate(out) + phosphate(in) + H(+)(in) = (S)-malate(in) + phosphate(out) + H(+)(out). The catalysed reaction is malonate(out) + phosphate(in) + H(+)(in) = malonate(in) + phosphate(out) + H(+)(out). The enzyme catalyses sulfate(out) + phosphate(in) + H(+)(in) = sulfate(in) + phosphate(out) + H(+)(out). It carries out the reaction (S)-malate(out) = (S)-malate(in). It catalyses the reaction L-aspartate(out) = L-aspartate(in). The catalysed reaction is phosphate(in) = phosphate(out). The enzyme catalyses chloride(in) = chloride(out). It carries out the reaction H(+)(in) = H(+)(out). It catalyses the reaction a long-chain fatty acid(out) = a long-chain fatty acid(in). Functionally, UCP are mitochondrial transporter proteins that create proton leaks across the inner mitochondrial membrane, thus uncoupling oxidative phosphorylation from ATP synthesis. As a result, energy is dissipated in the form of heat. In terms of biological role, antiporter that exports dicarboxylate intermediates of the Krebs cycle in exchange for phosphate plus a proton across the inner membrane of mitochondria, a process driven by mitochondrial motive force with an overall impact on glycolysis, glutaminolysis and glutathione-dependent redox balance. Continuous export of oxaloacetate and related four-carbon dicarboxylates from mitochondrial matrix into the cytosol negatively regulates the oxidation of acetyl-CoA substrates via the Krebs cycle, lowering the ATP/ADP ratio and reactive oxygen species (ROS) production. May mediate inducible proton entry into the mitochondrial matrix affecting ATP turnover as a protection mechanism against oxidative stress. The proton currents are most likely associated with fatty acid flipping across the inner membrane of mitochondria in a metabolic process regulated by free fatty acids and purine nucleotides. The protein is Dicarboxylate carrier UCP2 (ucp2) of Danio rerio (Zebrafish).